A 313-amino-acid chain; its full sequence is tRNA dimethylallyltransferase (313 aa).

9–16 (GPTAVGKT) is an ATP binding site. Position 11 to 16 (11 to 16 (TAVGKT)) interacts with substrate. The segment at 34-37 (DSMQ) is interaction with substrate tRNA.

Belongs to the IPP transferase family. Monomer. It depends on Mg(2+) as a cofactor.

The catalysed reaction is adenosine(37) in tRNA + dimethylallyl diphosphate = N(6)-dimethylallyladenosine(37) in tRNA + diphosphate. Catalyzes the transfer of a dimethylallyl group onto the adenine at position 37 in tRNAs that read codons beginning with uridine, leading to the formation of N6-(dimethylallyl)adenosine (i(6)A). This chain is tRNA dimethylallyltransferase, found in Lachnoclostridium phytofermentans (strain ATCC 700394 / DSM 18823 / ISDg) (Clostridium phytofermentans).